We begin with the raw amino-acid sequence, 74 residues long: Peptide BmKb2 (74 aa).

The first 22 residues, 1-22, serve as a signal peptide directing secretion; it reads MEIKYLLTVFLVLLIVSDHCQA. Lys-40 carries the post-translational modification Lysine amide. Residues 46–74 constitute a propeptide that is removed on maturation; it reads DLNGQIDHFKNFRKRDAELEELLSKLPIY.

It belongs to the non-disulfide-bridged peptide (NDBP) superfamily. Short antimicrobial peptide (group 4) family.

It is found in the secreted. The protein localises to the target cell membrane. Functionally, antibacterial peptide. This peptide gene is up-regulated at the transcriptional level after the venom gland is challenged by Gram-positive bacteria. This chain is Peptide BmKb2, found in Olivierus martensii (Manchurian scorpion).